Consider the following 204-residue polypeptide: Urease accessory protein UreG (204 aa).

11–18 lines the GTP pocket; the sequence is GPVGAGKT.

Belongs to the SIMIBI class G3E GTPase family. UreG subfamily. Homodimer. UreD, UreF and UreG form a complex that acts as a GTP-hydrolysis-dependent molecular chaperone, activating the urease apoprotein by helping to assemble the nickel containing metallocenter of UreC. The UreE protein probably delivers the nickel.

It is found in the cytoplasm. Facilitates the functional incorporation of the urease nickel metallocenter. This process requires GTP hydrolysis, probably effectuated by UreG. The sequence is that of Urease accessory protein UreG from Staphylococcus aureus (strain MSSA476).